Consider the following 194-residue polypeptide: PRELI domain containing protein 3B (194 aa).

The PRELI/MSF1 domain maps to Met-1–Glu-172. A phosphoserine mark is found at Ser-46 and Ser-51.

Belongs to the slowmo family.

In Sus scrofa (Pig), this protein is PRELI domain containing protein 3B (PRELID3B).